A 309-amino-acid chain; its full sequence is Sulfate adenylyltransferase subunit 2 (309 aa).

Belongs to the PAPS reductase family. CysD subfamily. Heterodimer composed of CysD, the smaller subunit, and CysN.

It carries out the reaction sulfate + ATP + H(+) = adenosine 5'-phosphosulfate + diphosphate. It participates in sulfur metabolism; hydrogen sulfide biosynthesis; sulfite from sulfate: step 1/3. Functionally, with CysN forms the ATP sulfurylase (ATPS) that catalyzes the adenylation of sulfate producing adenosine 5'-phosphosulfate (APS) and diphosphate, the first enzymatic step in sulfur assimilation pathway. APS synthesis involves the formation of a high-energy phosphoric-sulfuric acid anhydride bond driven by GTP hydrolysis by CysN coupled to ATP hydrolysis by CysD. This Methylorubrum populi (strain ATCC BAA-705 / NCIMB 13946 / BJ001) (Methylobacterium populi) protein is Sulfate adenylyltransferase subunit 2.